Reading from the N-terminus, the 254-residue chain is Leucyl/phenylalanyl-tRNA--protein transferase (254 aa).

It belongs to the L/F-transferase family.

It localises to the cytoplasm. The catalysed reaction is N-terminal L-lysyl-[protein] + L-leucyl-tRNA(Leu) = N-terminal L-leucyl-L-lysyl-[protein] + tRNA(Leu) + H(+). The enzyme catalyses N-terminal L-arginyl-[protein] + L-leucyl-tRNA(Leu) = N-terminal L-leucyl-L-arginyl-[protein] + tRNA(Leu) + H(+). It catalyses the reaction L-phenylalanyl-tRNA(Phe) + an N-terminal L-alpha-aminoacyl-[protein] = an N-terminal L-phenylalanyl-L-alpha-aminoacyl-[protein] + tRNA(Phe). Functionally, functions in the N-end rule pathway of protein degradation where it conjugates Leu, Phe and, less efficiently, Met from aminoacyl-tRNAs to the N-termini of proteins containing an N-terminal arginine or lysine. This is Leucyl/phenylalanyl-tRNA--protein transferase from Burkholderia cenocepacia (strain ATCC BAA-245 / DSM 16553 / LMG 16656 / NCTC 13227 / J2315 / CF5610) (Burkholderia cepacia (strain J2315)).